The sequence spans 509 residues: Probable cytochrome P450 519B1 (509 aa).

A helical membrane pass occupies residues 1-21; sequence MNLINLILYFILFWIVFDFIR. Cys-456 is a heme binding site.

The protein belongs to the cytochrome P450 family. Requires heme as cofactor.

Its subcellular location is the membrane. The protein is Probable cytochrome P450 519B1 (cyp519B1) of Dictyostelium discoideum (Social amoeba).